Consider the following 333-residue polypeptide: Meiotic drive suppressor wtf9 (333 aa).

Residues 1–69 are disordered; the sequence is MKNNYTSLKS…ENHSSGTTDN (69 aa). Basic and acidic residues predominate over residues 19–30; it reads KTDHEIDLEKGP. 4 consecutive transmembrane segments (helical) span residues 73–95, 108–130, 174–191, and 204–226; these read LLIKLLISFTSIILFNAPAVCYL, VEWTLFGFWCFVCTLALIFLTYF, WVVIIWLLWVVICYTLFL, and LICSTCSISAALLLFLLYVRLPF.

This sequence belongs to the WTF family. Homomer. Interacts with other proteins that exhibit high sequence similarity.

The protein localises to the spore membrane. Its subcellular location is the vacuole membrane. In terms of biological role, acts as a suppressor component of the dual wtf meiotic drive system, and can suppress but not confer meiotic drive by compatible poisons. Wtf meiotic drive systems promote unequal transmission of alleles from the parental zygote to progeny spores by encoding a poison and an antidote from the same locus; the poison is trans-acting and forms toxic aggregates in all spores within an ascus, wherease the antidote is spore-specific and targets aggregates for degradation by the vacuole. Meiotic drive by wtf systems therefore lead to poisoning of all progeny that do not inherit the dual poison/antidote allele, or express a compatible antidote. The polypeptide is Meiotic drive suppressor wtf9 (Schizosaccharomyces pombe (strain 972 / ATCC 24843) (Fission yeast)).